The following is a 562-amino-acid chain: Glutamine--tRNA ligase (562 aa).

Positions 35-45 match the 'HIGH' region motif; that stretch reads PEPNGYLHIGH. Residues 36-38 and 42-48 each bind ATP; these read EPN and HIGHAKS. L-glutamine is bound by residues D68 and Y213. ATP contacts are provided by residues T232 and 264 to 265; that span reads RL. A 'KMSKS' region motif is present at residues 271–275; it reads ITSKR.

This sequence belongs to the class-I aminoacyl-tRNA synthetase family. In terms of assembly, monomer.

Its subcellular location is the cytoplasm. The catalysed reaction is tRNA(Gln) + L-glutamine + ATP = L-glutaminyl-tRNA(Gln) + AMP + diphosphate. This is Glutamine--tRNA ligase from Neisseria gonorrhoeae (strain ATCC 700825 / FA 1090).